The sequence spans 623 residues: V-type proton ATPase catalytic subunit A (623 aa).

252–259 (GAFGCGKT) contributes to the ATP binding site.

The protein belongs to the ATPase alpha/beta chains family. V-ATPase is a heteromultimeric enzyme composed of a peripheral catalytic V1 complex (components A to H) attached to an integral membrane V0 proton pore complex (components: a, c, c'', d and e). Binds to the deubiquitinating enzyme AMSH3.

It localises to the vacuole membrane. It catalyses the reaction ATP + H2O + 4 H(+)(in) = ADP + phosphate + 5 H(+)(out). In terms of biological role, catalytic subunit of the peripheral V1 complex of vacuolar ATPase. V-ATPase vacuolar ATPase is responsible for acidifying a variety of intracellular compartments in eukaryotic cells. This Arabidopsis thaliana (Mouse-ear cress) protein is V-type proton ATPase catalytic subunit A (VHA-A).